The primary structure comprises 563 residues: MDTKTLIAAEIAKIVPELEQAAIFNLLETPKNSDMGDLAFPAFSLAKALRKAPQAIASDLAERIDASQFEKVAAVGPYVNFFLDKASISAQVLTQVIADGADYAQQDEGQGRHIAIDMSSPNIAKPFSIGHLRSTVIGDSLAHIFAKMGYKPVKINHLGDWGKQFGMLIVAYKKWGNEAAVQAHPIDELLKLYVRINAEAETDPSLDEEAREWFRRLEERDQEATELWQWFRDESLIEFNRLYDQLGVSFDSYNGEAFYNDKMDEVLELLEDKGLLVESKGAKVVNLEKYGIEHPALIKKSDGATLYITRDLAAALYRKRTYDFAKSVYVVGNEQAAHFKQLKAVLKEMGYDWSDDMTHVAFGLVTKGGAKLSTRKGNVILLEPTVAEAISRAANQIEAKNPKLANKEAVAHAVGVGAIKFYDLKTDRMNGYDFDLEAMVSFEGETGPYVQYAHARIQSILRKASFTPATDTSYSLNDPESWEIIKLIQDFPRIIKRAFDNFEPSIMAKFAIHLAQSFNKYYAHTRILEDDPERDNRLALCYATAIVLKEALRLLGVEAPNEM.

A 'HIGH' region motif is present at residues 121–131; that stretch reads PNIAKPFSIGH.

The protein belongs to the class-I aminoacyl-tRNA synthetase family. In terms of assembly, monomer.

The protein localises to the cytoplasm. It catalyses the reaction tRNA(Arg) + L-arginine + ATP = L-arginyl-tRNA(Arg) + AMP + diphosphate. The polypeptide is Arginine--tRNA ligase (Streptococcus equi subsp. equi (strain 4047)).